We begin with the raw amino-acid sequence, 104 residues long: Co-chaperonin GroES 2 (104 aa).

It belongs to the GroES chaperonin family. As to quaternary structure, heptamer of 7 subunits arranged in a ring. Interacts with the chaperonin GroEL.

It localises to the cytoplasm. Functionally, together with the chaperonin GroEL, plays an essential role in assisting protein folding. The GroEL-GroES system forms a nano-cage that allows encapsulation of the non-native substrate proteins and provides a physical environment optimized to promote and accelerate protein folding. GroES binds to the apical surface of the GroEL ring, thereby capping the opening of the GroEL channel. This Bradyrhizobium diazoefficiens (strain JCM 10833 / BCRC 13528 / IAM 13628 / NBRC 14792 / USDA 110) protein is Co-chaperonin GroES 2.